A 190-amino-acid polypeptide reads, in one-letter code: Elongation factor P-like protein (190 aa).

Belongs to the elongation factor P family.

The sequence is that of Elongation factor P-like protein from Shigella boydii serotype 4 (strain Sb227).